The primary structure comprises 430 residues: Histidine--tRNA ligase (430 aa).

This sequence belongs to the class-II aminoacyl-tRNA synthetase family. As to quaternary structure, homodimer.

The protein resides in the cytoplasm. The enzyme catalyses tRNA(His) + L-histidine + ATP = L-histidyl-tRNA(His) + AMP + diphosphate + H(+). This is Histidine--tRNA ligase from Lactococcus lactis subsp. lactis (strain IL1403) (Streptococcus lactis).